Reading from the N-terminus, the 450-residue chain is tRNA modification GTPase MnmE (450 aa).

(6S)-5-formyl-5,6,7,8-tetrahydrofolate-binding residues include Lys-21, Glu-78, and Lys-117. The 164-residue stretch at 213-376 (GHALSIVGKP…LSQKISAFFP (164 aa)) folds into the TrmE-type G domain. Asn-223 contacts K(+). GTP-binding positions include 223–228 (NAGKSS), 242–248 (SDIKGTT), and 267–270 (DTAG). Position 227 (Ser-227) interacts with Mg(2+). Residues Ser-242, Ile-244, and Thr-247 each coordinate K(+). Thr-248 serves as a coordination point for Mg(2+). A (6S)-5-formyl-5,6,7,8-tetrahydrofolate-binding site is contributed by Lys-450.

It belongs to the TRAFAC class TrmE-Era-EngA-EngB-Septin-like GTPase superfamily. TrmE GTPase family. In terms of assembly, homodimer. Heterotetramer of two MnmE and two MnmG subunits. The cofactor is K(+).

It localises to the cytoplasm. In terms of biological role, exhibits a very high intrinsic GTPase hydrolysis rate. Involved in the addition of a carboxymethylaminomethyl (cmnm) group at the wobble position (U34) of certain tRNAs, forming tRNA-cmnm(5)s(2)U34. In Helicobacter pylori (strain Shi470), this protein is tRNA modification GTPase MnmE.